The primary structure comprises 539 residues: MAKRILFREEARKALEQGINQLADAIKVTIGPKGRNVVLEKKFGAPQIVNDGVTIAKEIELADPLENTGAQLMREVASKTNDVAGDGTTTATILAQSMVREGLKNISAGANPVALRRGIEKTTAYLVEQIAAHAKPVEGRKTIAEVATISAGNDSEVGEMIAKAMDAVGRDGVITVEESKSLETELDVVEGMQFDRGYISPYFVTDSERMVAEYENAYLLITSNKISSLQDLVPILERVAREGRPLLVIAEDVEGEALATLVVNRLRGVLNAVAVKAPAFGDRRKAMLEDIAILTGGQLISEDVGIKLDKVTLDMMGVARKITVTKDKTTIVTDGSTKAAVEKRVAQIRKQLETTDSEYDREKLQERIAKLAGGVAVIKVGAATETELKDRKLRIEDALNATRAAVEEGIVPGGGATLLHLSKGIPAFKAKLNAEEQVGAEIVYRALQAPLFQIAHNAGLEGSVVVEKVLEKEMPFGFDALTGTYVDMFAQGIVDPAKVVRSALQNAASIAGMYLTTEAIVVEKPEPKPAAGSAPKGMM.

ATP-binding positions include 29-32 (TIGP), 86-90 (DGTTT), Gly-414, 479-481 (DAL), and Asp-495.

Belongs to the chaperonin (HSP60) family. In terms of assembly, forms a cylinder of 14 subunits composed of two heptameric rings stacked back-to-back. Interacts with the co-chaperonin GroES.

The protein localises to the cytoplasm. The enzyme catalyses ATP + H2O + a folded polypeptide = ADP + phosphate + an unfolded polypeptide.. In terms of biological role, together with its co-chaperonin GroES, plays an essential role in assisting protein folding. The GroEL-GroES system forms a nano-cage that allows encapsulation of the non-native substrate proteins and provides a physical environment optimized to promote and accelerate protein folding. This Synechococcus sp. (strain JA-2-3B'a(2-13)) (Cyanobacteria bacterium Yellowstone B-Prime) protein is Chaperonin GroEL 2.